Consider the following 219-residue polypeptide: Ras-related protein Rab-3B (219 aa).

Alanine 2 is subject to N-acetylalanine. 9 residues coordinate GTP: serine 31, serine 32, valine 33, glycine 34, lysine 35, threonine 36, serine 37, proline 49, and serine 53. Residue threonine 36 participates in Mg(2+) binding. Positions 45–58 (DTFTPAFVSTVGID) match the Switch 1 motif. Mg(2+) is bound by residues threonine 54 and aspartate 77. The Switch 2 signature appears at 78-96 (TAGQERYRTITTAYYRGAM). Position 80 (glycine 80) interacts with GTP. Threonine 86 carries the phosphothreonine modification. The GTP site is built by asparagine 135, lysine 136, aspartate 138, alanine 166, and lysine 167. Serine 188 carries the post-translational modification Phosphoserine. S-geranylgeranyl cysteine attachment occurs at residues cysteine 217 and cysteine 219. Cysteine 219 carries the post-translational modification Cysteine methyl ester.

The protein belongs to the small GTPase superfamily. Rab family. In terms of assembly, interacts with RIMS1, RIMS2, RPH3A and RPH3AL. The GTP-bound form interacts with GAS8/DRC4 (via coiled-coil domains). Interacts with GDI2, CHM and CHML; phosphorylation at Thr-86 disrupts these interactions. Interacts with MADD (via uDENN domain); the GTP-bound form is preferred for interaction. The cofactor is Mg(2+). Phosphorylation of Thr-86 in the switch II region by LRRK2 prevents the association of RAB regulatory proteins, including CHM, CHML and RAB GDP dissociation inhibitor GDI2.

The protein localises to the cell membrane. It localises to the golgi apparatus. It carries out the reaction GTP + H2O = GDP + phosphate + H(+). Its activity is regulated as follows. Regulated by guanine nucleotide exchange factors (GEFs) which promote the exchange of bound GDP for free GTP. Regulated by GTPase activating proteins (GAPs) which increase the GTP hydrolysis activity. Inhibited by GDP dissociation inhibitors (GDIs) which prevent Rab-GDP dissociation. Functionally, the small GTPases Rab are key regulators of intracellular membrane trafficking, from the formation of transport vesicles to their fusion with membranes. Rabs cycle between an inactive GDP-bound form and an active GTP-bound form that is able to recruit to membranes different sets of downstream effectors directly responsible for vesicle formation, movement, tethering and fusion. The chain is Ras-related protein Rab-3B (RAB3B) from Bos taurus (Bovine).